The sequence spans 497 residues: 4,4'-diapolycopene oxygenase (497 aa).

It belongs to the carotenoid/retinoid oxidoreductase family. Requires FAD as cofactor.

It catalyses the reaction all-trans-4,4'-diapolycopene + 4 AH2 + 4 O2 = all-trans-4,4'-diapolycopene-4,4'-dial + 4 A + 6 H2O. It carries out the reaction all-trans-4,4'-diaponeurosporene + 2 AH2 + 2 O2 = 4,4'-diaponeurosporenal + 2 A + 3 H2O. It participates in carotenoid biosynthesis. Functionally, involved in the biosynthesis of C30 carotenoids. Catalyzes the oxidation of the terminal methyl side groups of 4,4'-diapolycopene to yield 4,4'-diapolycopen-4,4'-dial via the aldehyde intermediate 4,4'-diapolycopen-al. Also able to catalyze the oxidation of the terminal methyl side group of 4,4'-diaponeurosporene to form 4,4'-diaponeurosporen-4-al. It has moderate to low activity on the C40 substrates neurosporene and lycopene, and has no detectable activity on zeta-carotene or beta-carotene. This is 4,4'-diapolycopene oxygenase from Methylomonas sp.